Here is an 83-residue protein sequence, read N- to C-terminus: MRLFLSLPVLVVVLSMVLEGPAPAQGAPDVSNPFDGLEELGKTLEDNTREFINRITQSELPAKMWDWFSETFRRVKEKLKIDS.

Positions 1-26 (MRLFLSLPVLVVVLSMVLEGPAPAQG) are cleaved as a signal peptide.

Belongs to the apolipoprotein C1 family.

Its subcellular location is the secreted. In terms of biological role, inhibitor of lipoprotein binding to the low density lipoprotein (LDL) receptor, LDL receptor-related protein, and very low density lipoprotein (VLDL) receptor. Associates with high density lipoproteins (HDL) and the triacylglycerol-rich lipoproteins in the plasma and makes up about 10% of the protein of the VLDL and 2% of that of HDL. Appears to interfere directly with fatty acid uptake and is also the major plasma inhibitor of cholesteryl ester transfer protein (CETP). Binds free fatty acids and reduces their intracellular esterification. Modulates the interaction of APOE with beta-migrating VLDL and inhibits binding of beta-VLDL to the LDL receptor-related protein. This is Apolipoprotein C-I, acidic form (APOC1A) from Pongo abelii (Sumatran orangutan).